Consider the following 319-residue polypeptide: Taste receptor type 2 member 30 (319 aa).

A topological domain (extracellular) is located at residue M1. Residues 2–22 (ITFLPIIFSILIVVIFVIGNF) traverse the membrane as a helical segment. Residues 23 to 46 (ANGFIALVNSIEWVKRQKISFVDQ) are Cytoplasmic-facing. A helical transmembrane segment spans residues 47 to 67 (ILTALAVSRVGLLWVLLLHWY). The Extracellular portion of the chain corresponds to 68-86 (ATQLNPAFYSVEVRITAYN). Residues 87–107 (VWAVTNHFSSWLATSLSMFYL) form a helical membrane-spanning segment. Residues 108-126 (LRIANFSNLIFLRIKRRVK) lie on the Cytoplasmic side of the membrane. The chain crosses the membrane as a helical span at residues 127 to 147 (SVVLVILLGPLLFLVCHLFVI). The Extracellular segment spans residues 148–178 (NMDETVWTKEYEGNVTWKIKLRSAMYHSNMT). N-linked (GlcNAc...) asparagine glycans are attached at residues N161 and N176. The chain crosses the membrane as a helical span at residues 179 to 199 (LTMLANFVPLTLTLISFLLLI). Topologically, residues 200-229 (CSLCKHLKKMQLHGKGSQDPSTKVHIKALQ) are cytoplasmic. The chain crosses the membrane as a helical span at residues 230–250 (TVTSFLLLCAIYFLSMIISVC). Residues 251-259 (NFGRLEKQP) are Extracellular-facing. Residues 260-280 (VFMFCQAIIFSYPSTHPFILI) traverse the membrane as a helical segment. At 281-319 (LGNKKLKQIFLSVLRHVRYWVKDRSLRLHRFTRGALCVF) the chain is on the cytoplasmic side.

This sequence belongs to the G-protein coupled receptor T2R family. As to expression, expressed in subsets of taste receptor cells of the tongue and exclusively in gustducin-positive cells.

The protein localises to the membrane. Functionally, receptor that may play a role in the perception of bitterness and is gustducin-linked. May play a role in sensing the chemical composition of the gastrointestinal content. The activity of this receptor may stimulate alpha gustducin, mediate PLC-beta-2 activation and lead to the gating of TRPM5. This chain is Taste receptor type 2 member 30 (TAS2R30), found in Homo sapiens (Human).